The primary structure comprises 264 residues: Cell cycle regulator CcrZ (264 aa).

ATP-binding residues include F32, W70, and G73. The Brenner's motif [HXDhX3N] signature appears at 157–164 (HGDVRHSN). The active-site Proton acceptor is D159. Residues 173 to 196 (IYLVDWDSVRLTDRMFDVAHMLCH) carry the APH motif.

It belongs to the aminoglycoside phosphotransferase family. Monomer in solution. Interacts with DnaA (via domains I (1-82) and III (111-326)). Interacts with DnaB. Interacts with FtsZ; the interaction is direct and ensures correct localization during the cell cycle.

It is found in the cytoplasm. It carries out the reaction D-ribose + ATP = D-ribose 5-phosphate + ADP + H(+). It catalyses the reaction 2-deoxy-D-ribose + ATP = 2-deoxy-D-ribose 5-phosphate + ADP + H(+). In terms of biological role, plays a role in cell cycle regulation and chromosome integrity. Activates DnaA-dependent chromosomal DNA replication initiation ensuring that the chromosome is replicated at the right time during the cell cycle. May regulate replication initiation through phosphorylation of a possible second messenger or metabolite, and by interacting with replication initiation proteins. Has ATPase activity with D-ribose and 2-deoxy-D-ribose in vitro, but not with choline. Involved in DNA damage response. In Streptococcus pneumoniae serotype 2 (strain D39 / NCTC 7466), this protein is Cell cycle regulator CcrZ.